Reading from the N-terminus, the 85-residue chain is Large ribosomal subunit protein eL34 (85 aa).

The protein belongs to the eukaryotic ribosomal protein eL34 family.

The sequence is that of Large ribosomal subunit protein eL34 from Saccharolobus islandicus (strain Y.N.15.51 / Yellowstone #2) (Sulfolobus islandicus).